A 183-amino-acid polypeptide reads, in one-letter code: Potassium-transporting ATPase KdpC subunit (183 aa).

A helical transmembrane segment spans residues 10–30 (ASLLVLSLVTGVAYPLLVTGI).

Belongs to the KdpC family. As to quaternary structure, the system is composed of three essential subunits: KdpA, KdpB and KdpC.

It localises to the cell inner membrane. In terms of biological role, part of the high-affinity ATP-driven potassium transport (or Kdp) system, which catalyzes the hydrolysis of ATP coupled with the electrogenic transport of potassium into the cytoplasm. This subunit acts as a catalytic chaperone that increases the ATP-binding affinity of the ATP-hydrolyzing subunit KdpB by the formation of a transient KdpB/KdpC/ATP ternary complex. This chain is Potassium-transporting ATPase KdpC subunit, found in Pseudomonas aeruginosa (strain UCBPP-PA14).